We begin with the raw amino-acid sequence, 1065 residues long: Inversin (1065 aa).

ANK repeat units lie at residues 13-42 (SLAS…ALKD), 47-76 (FGRT…DVNK), 80-110 (SQRT…WMQK), 113-144 (EEMT…EVDT), 148-177 (NKQT…NIGI), 181-213 (EGKI…TESL), 220-250 (EGRT…NITS), 254-283 (LFRT…SGTI), 288-317 (QGAT…VKDD), 321-350 (EGRT…DIDI), 356-385 (YGGT…QVDA), 389-418 (MKHT…RVDL), 422-451 (DGHS…NPNV), 455-484 (AGRT…DPNI), 488-517 (EGRT…FPNQ), and 523-553 (ERYT…SIAA). 3-hydroxyasparagine is present on asparagine 75. Positions 490–498 (RTALHWSCN) match the D-box 1 motif. Residues 555–584 (QDIAAFKIQAVYKGYKVRKAFRDRKNLLMK) form the IQ 1 domain. Over residues 589–616 (RKDAAAKKREEENKRKEAEQQKGRRSPD) the composition is skewed to basic and acidic residues. Disordered regions lie at residues 589–833 (RKDA…TPRN) and 847–886 (HLPQ…PLSG). The segment covering 627 to 640 (PSTQDVPSRQSRAP) has biased composition (polar residues). A Phosphoserine modification is found at serine 661. Over residues 677–686 (SSDLQGTNSR) the composition is skewed to polar residues. 6 stretches are compositionally biased toward basic and acidic residues: residues 687–697 (RPNETAREHSK), 706–715 (RPNEGSDGSR), 723–736 (EKSR…ERCA), 752–762 (GPDEKGEDSRR), 770–786 (HDSH…EPKA), and 853–863 (EELRSGARRLE). The D-box 2 motif lies at 909-917 (RKELFRKKN). In terms of domain architecture, IQ 2 spans 916 to 945 (KNKAAAVIQRAWRSYQLRKHLSHLRHMKQL). The tract at residues 976 to 999 (TTAVSKAPKSPSKGTSGTKSTKHS) is disordered. Residues 983–994 (PKSPSKGTSGTK) are compositionally biased toward low complexity.

Binds calmodulin via its IQ domains. Interacts with APC2. Interacts with alpha-, beta-, and gamma-catenin. Interacts with N-cadherin (CDH2). Interacts with microtubules. Interacts with NPHP1. Interacts with DVL1, PRICKLE (PRICKLE1 or PRICKLE2) and Strabismus (VANGL1 or VANGL2). Interacts with IQCB1; the interaction likely requires additional interactors. Component of a complex containing at least ANKS6, INVS, NEK8 and NPHP3. ANKS6 may organize complex assembly by linking INVS and NPHP3 to NEK8 and INVS may target the complex to the proximal ciliary axoneme. Post-translationally, may be ubiquitinated via its interaction with APC2. Hydroxylated at Asn-75, most probably by HIF1AN. As to expression, widely expressed. Strongly expressed in the primary cilia of renal tubular cells.

The protein localises to the cytoplasm. The protein resides in the cytoskeleton. It is found in the spindle. Its subcellular location is the membrane. It localises to the nucleus. The protein localises to the cell projection. The protein resides in the cilium. Required for normal renal development and establishment of left-right axis. Probably acts as a molecular switch between different Wnt signaling pathways. Inhibits the canonical Wnt pathway by targeting cytoplasmic disheveled (DVL1) for degradation by the ubiquitin-proteasome. This suggests that it is required in renal development to oppose the repression of terminal differentiation of tubular epithelial cells by Wnt signaling. Involved in the organization of apical junctions in kidney cells together with NPHP1, NPHP4 and RPGRIP1L/NPHP8. Does not seem to be strictly required for ciliogenesis. The polypeptide is Inversin (INVS) (Homo sapiens (Human)).